A 208-amino-acid chain; its full sequence is Small ribosomal subunit protein uS4 (208 aa).

The 67-residue stretch at 99-165 (RRLDNVVFQL…PRLKEILSSL (67 aa)) folds into the S4 RNA-binding domain.

It belongs to the universal ribosomal protein uS4 family. As to quaternary structure, part of the 30S ribosomal subunit. Contacts protein S5. The interaction surface between S4 and S5 is involved in control of translational fidelity.

In terms of biological role, one of the primary rRNA binding proteins, it binds directly to 16S rRNA where it nucleates assembly of the body of the 30S subunit. With S5 and S12 plays an important role in translational accuracy. The protein is Small ribosomal subunit protein uS4 of Desulfitobacterium hafniense (strain Y51).